A 1327-amino-acid polypeptide reads, in one-letter code: Putative ATP-dependent RNA helicase ucp12 (1327 aa).

2 disordered regions span residues 1-58 (MGSK…KQLV) and 201-222 (QAAR…NEKV). The span at 18 to 41 (SKNKEKNIKGKKKNSLDPIEKNKQ) shows a compositional bias: basic and acidic residues. Over residues 42–58 (ETAGLQTTSRPTAKQLV) the composition is skewed to polar residues. Residues 276–315 (EPDTSIVNDLISLGFRDIHAKEACQYCVSLEDALEWLIIH) form the UBA domain. The RWD domain occupies 405 to 504 (DDVSALQSIL…NHLQENIEDF (100 aa)). In terms of domain architecture, Helicase ATP-binding spans 587 to 756 (MDAIQHSQVV…FGNAGHLHIH (170 aa)). ATP is bound at residue 600-607 (GETGSGKS). Residues 703–706 (DEVH) carry the DEAH box motif. The Helicase C-terminal domain occupies 797 to 968 (LISRLVSSID…QVCLNVVPLV (172 aa)).

Belongs to the DEAD box helicase family. DEAH subfamily.

Its subcellular location is the cytoplasm. It catalyses the reaction ATP + H2O = ADP + phosphate + H(+). Its function is as follows. Probable ATP-binding RNA helicase. The polypeptide is Putative ATP-dependent RNA helicase ucp12 (ucp12) (Schizosaccharomyces pombe (strain 972 / ATCC 24843) (Fission yeast)).